The chain runs to 412 residues: Branched-chain alpha-ketoacid dehydrogenase kinase (412 aa).

The N-terminal 30 residues, Met-1–Arg-30, are a transit peptide targeting the mitochondrion. Phosphoserine is present on Ser-31. The Histidine kinase domain occupies Leu-159–Asp-404. N6-acetyllysine is present on residues Lys-192 and Lys-233. Residues Asn-279 and Asp-315 each coordinate ATP. Position 279 (Asn-279) interacts with Mg(2+). Residues Val-328, Asp-330, and Phe-333 each coordinate K(+). The ATP site is built by Thr-334 and Thr-335. Phosphoserine occurs at positions 356 and 360. 3 residues coordinate ATP: His-364, Gly-367, and Leu-370. Gly-367 contacts K(+).

This sequence belongs to the PDK/BCKDK protein kinase family. In terms of assembly, homodimer. Homotetramer. Dimerizes through interaction of two opposing nucleotide-binding domains. Interacts with E2 component of the branched-chain alpha-ketoacid dehydrogenase (BCKDH) complex. Competes with BCKDK for binding to the E2 component; this interaction is modulated by branched-chain alpha-keto acids. At steady state, BCKDH holoenzyme contains BCKDK and BCKDHA is phosphorylated. In response to high levels of branched-chain alpha-keto acids, the inhibitory BCKDK is replaced by activating PPM1K leading to BCKDHA dephosphorylation and BCAA degradation. Post-translationally, autophosphorylated. As to expression, expressed in heart and liver.

It localises to the mitochondrion matrix. The protein localises to the mitochondrion. It catalyses the reaction L-seryl-[3-methyl-2-oxobutanoate dehydrogenase] + ATP = O-phospho-L-seryl-[3-methyl-2-oxobutanoate dehydrogenase] + ADP + H(+). The catalysed reaction is L-seryl-[protein] + ATP = O-phospho-L-seryl-[protein] + ADP + H(+). The ATP-ase activity is up-regulated by potassium and rubidium ions but not by sodium ions. Up-regulated in the presence of apo- or lipoylated-DBT/E2b subunit of the BCKDH complex. In terms of biological role, serine/threonine-protein kinase component of macronutrients metabolism. Forms a functional kinase and phosphatase pair with PPM1K, serving as a metabolic regulatory node that coordinates branched-chain amino acids (BCAAs) with glucose and lipid metabolism via two distinct phosphoprotein targets: mitochondrial BCKDHA subunit of the branched-chain alpha-ketoacid dehydrogenase (BCKDH) complex and cytosolic ACLY, a lipogenic enzyme of Krebs cycle. Phosphorylates and inactivates mitochondrial BCKDH complex a multisubunit complex consisting of three multimeric components each involved in different steps of BCAA catabolism: E1 composed of BCKDHA and BCKDHB, E2 core composed of DBT monomers, and E3 composed of DLD monomers. Associates with the E2 component of BCKDH complex and phosphorylates BCKDHA on Ser-333, leading to conformational changes that interrupt substrate channeling between E1 and E2 and inactivates the BCKDH complex. phosphorylates ACLY on Ser-455 in response to changes in cellular carbohydrate abundance such as occurs during fasting to feeding metabolic transition. Refeeding stimulates MLXIPL/ChREBP transcription factor, leading to increased BCKDK to PPM1K expression ratio, phosphorylation and activation of ACLY that ultimately results in the generation of malonyl-CoA and oxaloacetate immediate substrates of de novo lipogenesis and glucogenesis, respectively. Recognizes phosphosites having SxxE/D canonical motif. This is Branched-chain alpha-ketoacid dehydrogenase kinase (Bckdk) from Rattus norvegicus (Rat).